A 92-amino-acid chain; its full sequence is Small ribosomal subunit protein uS19c (92 aa).

Belongs to the universal ribosomal protein uS19 family.

It localises to the plastid. Its function is as follows. Protein S19 forms a complex with S13 that binds strongly to the 16S ribosomal RNA. The chain is Small ribosomal subunit protein uS19c from Cuscuta exaltata (Tall dodder).